We begin with the raw amino-acid sequence, 180 residues long: Large ribosomal subunit protein uL5 (180 aa).

Belongs to the universal ribosomal protein uL5 family. Part of the 50S ribosomal subunit; part of the 5S rRNA/L5/L18/L25 subcomplex. Contacts the 5S rRNA and the P site tRNA. Forms a bridge to the 30S subunit in the 70S ribosome.

This is one of the proteins that bind and probably mediate the attachment of the 5S RNA into the large ribosomal subunit, where it forms part of the central protuberance. In the 70S ribosome it contacts protein S13 of the 30S subunit (bridge B1b), connecting the 2 subunits; this bridge is implicated in subunit movement. Contacts the P site tRNA; the 5S rRNA and some of its associated proteins might help stabilize positioning of ribosome-bound tRNAs. This Mycoplasma pneumoniae (strain ATCC 29342 / M129 / Subtype 1) (Mycoplasmoides pneumoniae) protein is Large ribosomal subunit protein uL5.